A 38-amino-acid chain; its full sequence is Non-specific lipid-transfer protein P2 (38 aa).

Belongs to the plant LTP family.

It is found in the secreted. In terms of biological role, plant non-specific lipid-transfer proteins transfer phospholipids as well as galactolipids across membranes. May play a role in wax or cutin deposition in the cell walls of expanding epidermal cells and certain secretory tissues. This Vitis sp. (Grape) protein is Non-specific lipid-transfer protein P2.